Here is a 299-residue protein sequence, read N- to C-terminus: MWFKNLQLHRFSAPWSPSADEVEASLAKHAFFPGTSLEMQTQGWASPRDNGQLVHAVGRQMLLTLRTEKKLLPATVVNQVTKARAAEVEEQQGYKPGRKQLRELKEQVTEELLPRAFSIRRDTRVWIDPDNGWLAIDAASTAKADEVRGMLFKALDALPLANLHVNQSPVAAMTDWLSTDVAPAGFTVDQEIELQSGSESKATVRYVRHPLDAEDLRRHISGGKRCTRLAMTWNDRVSFVLTDSLAIKRVAPLDVIKEQADGTVSDEDERFDADFTLMAGELAGMLGDLTEALGGERKA.

It belongs to the RdgC family.

It localises to the cytoplasm. The protein localises to the nucleoid. Functionally, may be involved in recombination. This is Recombination-associated protein RdgC from Cupriavidus pinatubonensis (strain JMP 134 / LMG 1197) (Cupriavidus necator (strain JMP 134)).